The following is a 314-amino-acid chain: Melanoma-associated antigen 2 (314 aa).

Positions methionine 1–glycine 20 are enriched in basic and acidic residues. The interval methionine 1 to serine 69 is disordered. The segment covering glutamate 21–threonine 44 has biased composition (low complexity). At serine 64 the chain carries Phosphoserine. Positions isoleucine 109 to alanine 308 constitute an MAGE domain.

In terms of assembly, interacts with TRIM28 and UBE2H. Interacts with HDAC3. Interacts with PML (isoform PML-1, isoform PML-2, isoform PML-3, isoform PML-4 and isoform PML-5). Expressed in many tumors of several types, such as melanoma, head and neck squamous cell carcinoma, lung carcinoma and breast carcinoma, but not in normal tissues except for testes.

Its subcellular location is the nucleus. The protein localises to the PML body. Its function is as follows. Reduces p53/TP53 transactivation function through recruitment of HDAC3 to p53/TP53 transcription sites. Also represses p73/TP73 activity. Proposed to enhance ubiquitin ligase activity of RING-type zinc finger-containing E3 ubiquitin-protein ligases. In vitro enhances ubiquitin ligase activity of TRIM28 and stimulates p53/TP53 ubiquitination by TRIM28 potentially in presence of Ubl-conjugating enzyme UBE2H. Proposed to act through recruitment and/or stabilization of the Ubl-conjugating enzyme (E2) at the E3:substrate complex. May play a role in embryonal development and tumor transformation or aspects of tumor progression. In vitro promotes cell viability in melanoma cell lines. Antigen recognized on a melanoma by autologous cytolytic T-lymphocytes. Negatively regulates acetylation and sumoylation of PML and represses PML-induced p53/TP53 acetylation and activation. In Homo sapiens (Human), this protein is Melanoma-associated antigen 2 (MAGEA2).